Here is a 1433-residue protein sequence, read N- to C-terminus: DNA-directed RNA polymerase subunit beta' (1433 aa).

Residues Cys66, Cys68, Cys81, and Cys84 each contribute to the Zn(2+) site. Mg(2+)-binding residues include Asp473, Asp475, and Asp477. 4 residues coordinate Zn(2+): Cys815, Cys889, Cys896, and Cys899.

This sequence belongs to the RNA polymerase beta' chain family. As to quaternary structure, the RNAP catalytic core consists of 2 alpha, 1 beta, 1 beta' and 1 omega subunit. When a sigma factor is associated with the core the holoenzyme is formed, which can initiate transcription. Mg(2+) serves as cofactor. The cofactor is Zn(2+).

The catalysed reaction is RNA(n) + a ribonucleoside 5'-triphosphate = RNA(n+1) + diphosphate. Its function is as follows. DNA-dependent RNA polymerase catalyzes the transcription of DNA into RNA using the four ribonucleoside triphosphates as substrates. The protein is DNA-directed RNA polymerase subunit beta' of Porphyromonas gingivalis (strain ATCC 33277 / DSM 20709 / CIP 103683 / JCM 12257 / NCTC 11834 / 2561).